We begin with the raw amino-acid sequence, 442 residues long: Histidine--tRNA ligase (442 aa).

Belongs to the class-II aminoacyl-tRNA synthetase family. In terms of assembly, homodimer.

The protein resides in the cytoplasm. It carries out the reaction tRNA(His) + L-histidine + ATP = L-histidyl-tRNA(His) + AMP + diphosphate + H(+). This chain is Histidine--tRNA ligase, found in Helicobacter pylori (strain P12).